The following is a 111-amino-acid chain: Gene 21 protein (111 aa).

This is Gene 21 protein (21) from Mycobacterium (Mycobacteriophage L5).